Here is a 291-residue protein sequence, read N- to C-terminus: Putative fatty acid elongase 4 (291 aa).

Helical transmembrane passes span 46 to 66 (ILFQ…FILI), 79 to 99 (FTLK…SIIA), and 254 to 274 (NLYL…QFFV).

The protein belongs to the ELO family.

Its subcellular location is the membrane. The catalysed reaction is a very-long-chain acyl-CoA + malonyl-CoA + H(+) = a very-long-chain 3-oxoacyl-CoA + CO2 + CoA. The protein operates within lipid metabolism; fatty acid biosynthesis. Could be implicated in synthesis of very long chain fatty acids. This is Putative fatty acid elongase 4 (elo-4) from Caenorhabditis elegans.